A 278-amino-acid polypeptide reads, in one-letter code: 3-methyl-2-oxobutanoate hydroxymethyltransferase (278 aa).

Positions 43 and 82 each coordinate Mg(2+). 3-methyl-2-oxobutanoate is bound by residues 43–44 (DS), D82, and K112. E114 contributes to the Mg(2+) binding site. E181 serves as the catalytic Proton acceptor.

The protein belongs to the PanB family. Homodecamer; pentamer of dimers. Mg(2+) serves as cofactor.

The protein resides in the cytoplasm. It carries out the reaction 3-methyl-2-oxobutanoate + (6R)-5,10-methylene-5,6,7,8-tetrahydrofolate + H2O = 2-dehydropantoate + (6S)-5,6,7,8-tetrahydrofolate. Its pathway is cofactor biosynthesis; (R)-pantothenate biosynthesis; (R)-pantoate from 3-methyl-2-oxobutanoate: step 1/2. Catalyzes the reversible reaction in which hydroxymethyl group from 5,10-methylenetetrahydrofolate is transferred onto alpha-ketoisovalerate to form ketopantoate. This Bacillus cereus (strain ATCC 14579 / DSM 31 / CCUG 7414 / JCM 2152 / NBRC 15305 / NCIMB 9373 / NCTC 2599 / NRRL B-3711) protein is 3-methyl-2-oxobutanoate hydroxymethyltransferase.